Here is a 177-residue protein sequence, read N- to C-terminus: MTKESLEKATFAGGCFWCMVKPFDTQPGIEKVVSGYTGGHTVNPTYKEVCSGTTGHTEAVEITFDPAVFPYEKLVEVYWQQTDPTDAAGQFVDRGDSYRPVIFYHNEEQRQIAEKSKAALDASGRFKKPVVTEIAKAETFYPAEEYHQDFYKKEKAHYEGYQVASGRAAFIDANWKG.

Cys-15 is a catalytic residue.

Belongs to the MsrA Met sulfoxide reductase family.

It catalyses the reaction L-methionyl-[protein] + [thioredoxin]-disulfide + H2O = L-methionyl-(S)-S-oxide-[protein] + [thioredoxin]-dithiol. It carries out the reaction [thioredoxin]-disulfide + L-methionine + H2O = L-methionine (S)-S-oxide + [thioredoxin]-dithiol. Its function is as follows. Has an important function as a repair enzyme for proteins that have been inactivated by oxidation. Catalyzes the reversible oxidation-reduction of methionine sulfoxide in proteins to methionine. The sequence is that of Peptide methionine sulfoxide reductase MsrA from Listeria innocua serovar 6a (strain ATCC BAA-680 / CLIP 11262).